We begin with the raw amino-acid sequence, 63 residues long: AIGPVADIDIDVVSLGMVDQSLLREMHEVSNVALQAMKGSDEYDFNANLRLVLWNQPDFMWLR.

It belongs to the multicopper oxidase family. As to quaternary structure, monomer. It depends on Cu cation as a cofactor. Glycosylated; contains 16% carbohydrates.

It is found in the secreted. It catalyses the reaction 4 hydroquinone + O2 = 4 benzosemiquinone + 2 H2O. With respect to regulation, inhibited by sodium azide. Functionally, lignin degradation and detoxification of lignin-derived products. Oxidation of a broad range of substrates including mono-, di- and polyphenols, aromatic amines and methoxy-substituted phenols accompanied by reduction of oxygen to water. The chain is Laccase-C1 from Cerrena unicolor (Canker rot fungus).